The following is a 1068-amino-acid chain: Phosphatidylinositol 4,5-bisphosphate 3-kinase catalytic subunit alpha isoform (1068 aa).

Residues 16–105 enclose the PI3K-ABD domain; that stretch reads MPPRILVECL…QPFLKVIEPV (90 aa). The 103-residue stretch at 187–289 folds into the PI3K-RBD domain; the sequence is KGQIIVVIWV…GRMPNLMLMA (103 aa). The C2 PI3K-type domain occupies 330–487; sequence INSALRIKIL…DWFSSVVKFP (158 aa). The PIK helical domain occupies 517–694; sequence LARDNELREN…GLLLESYCRA (178 aa). The 287-residue stretch at 765 to 1051 folds into the PI3K/PI4K catalytic domain; it reads RLEECRIMSS…QMNDAHHGGW (287 aa). The G-loop stretch occupies residues 771–777; that stretch reads IMSSAKR. The tract at residues 912–920 is catalytic loop; the sequence is GIGDRHNSN. The interval 931–957 is activation loop; it reads HIDFGHFLDHKKKKFGYKRERVPFVLT.

This sequence belongs to the PI3/PI4-kinase family. As to quaternary structure, heterodimer of a catalytic subunit PIK3CA and a p85 regulatory subunit (PIK3R1, PIK3R2 or PIK3R3). Interacts with IRS1 in nuclear extracts. Interacts with RUFY3. Interacts with RASD2. Interacts with APPL1. Interacts with HRAS and KRAS. Interaction with HRAS/KRAS is required for PI3K pathway signaling and cell proliferation stimulated by EGF and FGF2. Interacts with FAM83B; activates the PI3K/AKT signaling cascade.

The catalysed reaction is L-seryl-[protein] + ATP = O-phospho-L-seryl-[protein] + ADP + H(+). The enzyme catalyses a 1,2-diacyl-sn-glycero-3-phospho-(1D-myo-inositol) + ATP = a 1,2-diacyl-sn-glycero-3-phospho-(1D-myo-inositol-3-phosphate) + ADP + H(+). It catalyses the reaction a 1,2-diacyl-sn-glycero-3-phospho-(1D-myo-inositol-4,5-bisphosphate) + ATP = a 1,2-diacyl-sn-glycero-3-phospho-(1D-myo-inositol-3,4,5-trisphosphate) + ADP + H(+). It carries out the reaction 1,2-dioctanoyl-sn-glycero-3-phospho-(1D-myo-inositol-4,5-bisphosphate) + ATP = 1,2-dioctanoyl-sn-glycero-3-phospho-(1D-myo-inositol-3,4,5-trisphosphate) + ADP + H(+). The catalysed reaction is 1-octadecanoyl-2-(5Z,8Z,11Z,14Z)-eicosatetraenoyl-sn-glycero-3-phospho-1D-myo-inositol 4,5-bisphosphate + ATP = 1-octadecanoyl-2-(5Z,8Z,11Z,14Z-eicosatetraenoyl)-sn-glycero-3-phospho-(1D-myo-inositol 3,4,5-triphosphate) + ADP + H(+). It participates in phospholipid metabolism; phosphatidylinositol phosphate biosynthesis. Functionally, phosphoinositide-3-kinase (PI3K) phosphorylates phosphatidylinositol (PI) and its phosphorylated derivatives at position 3 of the inositol ring to produce 3-phosphoinositides. Uses ATP and PtdIns(4,5)P2 (phosphatidylinositol 4,5-bisphosphate) to generate phosphatidylinositol 3,4,5-trisphosphate (PIP3). PIP3 plays a key role by recruiting PH domain-containing proteins to the membrane, including AKT1 and PDPK1, activating signaling cascades involved in cell growth, survival, proliferation, motility and morphology. Participates in cellular signaling in response to various growth factors. Involved in the activation of AKT1 upon stimulation by receptor tyrosine kinases ligands such as EGF, insulin, IGF1, VEGFA and PDGF. Involved in signaling via insulin-receptor substrate (IRS) proteins. Essential in endothelial cell migration during vascular development through VEGFA signaling, possibly by regulating RhoA activity. Required for lymphatic vasculature development, possibly by binding to RAS and by activation by EGF and FGF2, but not by PDGF. Regulates invadopodia formation through the PDPK1-AKT1 pathway. Participates in cardiomyogenesis in embryonic stem cells through a AKT1 pathway. Participates in vasculogenesis in embryonic stem cells through PDK1 and protein kinase C pathway. In addition to its lipid kinase activity, it displays a serine-protein kinase activity that results in the autophosphorylation of the p85alpha regulatory subunit as well as phosphorylation of other proteins such as 4EBP1, H-Ras, the IL-3 beta c receptor and possibly others. Plays a role in the positive regulation of phagocytosis and pinocytosis. The chain is Phosphatidylinositol 4,5-bisphosphate 3-kinase catalytic subunit alpha isoform (PIK3CA) from Bos taurus (Bovine).